A 289-amino-acid polypeptide reads, in one-letter code: MLRDLFVKKKKYAAIPSEQVRKDVPDGVMTKCPKCKKIMYTKEVLKNLKVCVNCGYHHPMNAWERLDSILDEGSFREYDKEMVSLNPLEFPNYEEKLESDRKKTELNEAVVTGEGTIDDMLVVVAVMDSRFRMGSMGSVVGEKIARAVEKAYDLQVPFIIFTASGGARMQEGILSLMQMAKTSVALKKHSNAGGLFISVMTHPTTGGVSASFASIGDYNLAEPGALIGFAGRRVIEQTVREKLPEDFQTAEFLLEHGQLDAVVHRDDMRESLRKILEVHQGGEMAVWQS.

A CoA carboxyltransferase N-terminal domain is found at 28-289 (VMTKCPKCKK…QGGEMAVWQS (262 aa)). Residues Cys-32, Cys-35, Cys-51, and Cys-54 each coordinate Zn(2+). Residues 32–54 (CPKCKKIMYTKEVLKNLKVCVNC) form a C4-type zinc finger.

It belongs to the AccD/PCCB family. Acetyl-CoA carboxylase is a heterohexamer composed of biotin carboxyl carrier protein (AccB), biotin carboxylase (AccC) and two subunits each of ACCase subunit alpha (AccA) and ACCase subunit beta (AccD). It depends on Zn(2+) as a cofactor.

The protein resides in the cytoplasm. The enzyme catalyses N(6)-carboxybiotinyl-L-lysyl-[protein] + acetyl-CoA = N(6)-biotinyl-L-lysyl-[protein] + malonyl-CoA. It functions in the pathway lipid metabolism; malonyl-CoA biosynthesis; malonyl-CoA from acetyl-CoA: step 1/1. In terms of biological role, component of the acetyl coenzyme A carboxylase (ACC) complex. Biotin carboxylase (BC) catalyzes the carboxylation of biotin on its carrier protein (BCCP) and then the CO(2) group is transferred by the transcarboxylase to acetyl-CoA to form malonyl-CoA. The sequence is that of Acetyl-coenzyme A carboxylase carboxyl transferase subunit beta from Bacillus thuringiensis (strain Al Hakam).